We begin with the raw amino-acid sequence, 248 residues long: Protein maestro (248 aa).

Positions 1 to 21 (MDQRQRRILGQPLSIPTSQPK) are disordered. An HEAT repeat occupies 128-163 (SFFIDITLQTRTLLDDENDSLRYSAFVLFGQLAAFA).

As to expression, ubiquitous.

It localises to the nucleus. Its subcellular location is the nucleolus. The protein is Protein maestro (MRO) of Homo sapiens (Human).